The chain runs to 272 residues: Putative hydro-lyase RPB_3621 (272 aa).

The protein belongs to the D-glutamate cyclase family.

This Rhodopseudomonas palustris (strain HaA2) protein is Putative hydro-lyase RPB_3621.